A 210-amino-acid polypeptide reads, in one-letter code: V-type ATP synthase subunit D (210 aa).

It belongs to the V-ATPase D subunit family.

Produces ATP from ADP in the presence of a proton gradient across the membrane. This chain is V-type ATP synthase subunit D, found in Coprothermobacter proteolyticus (strain ATCC 35245 / DSM 5265 / OCM 4 / BT).